Consider the following 277-residue polypeptide: tRNA uridine(34) hydroxylase (277 aa).

Positions 126 to 221 (SSPDVHVIDT…YLETMRGDDS (96 aa)) constitute a Rhodanese domain. Residue cysteine 181 is the Cysteine persulfide intermediate of the active site.

Belongs to the TrhO family.

It catalyses the reaction uridine(34) in tRNA + AH2 + O2 = 5-hydroxyuridine(34) in tRNA + A + H2O. Catalyzes oxygen-dependent 5-hydroxyuridine (ho5U) modification at position 34 in tRNAs. The sequence is that of tRNA uridine(34) hydroxylase from Anaplasma marginale (strain St. Maries).